A 350-amino-acid chain; its full sequence is Protein-glutamate methylesterase/protein-glutamine glutaminase 6 (350 aa).

The Response regulatory domain occupies 11–126 (RVLVVDDSAA…LAPVREELLE (116 aa)). Asp-62 bears the 4-aspartylphosphate mark. The CheB-type methylesterase domain maps to 150–347 (ELEPARVAVV…ARLVEFARDA (198 aa)). Catalysis depends on residues Ser-162, His-189, and Asp-289.

The protein belongs to the CheB family. Phosphorylated by CheA. Phosphorylation of the N-terminal regulatory domain activates the methylesterase activity.

It localises to the cytoplasm. The catalysed reaction is [protein]-L-glutamate 5-O-methyl ester + H2O = L-glutamyl-[protein] + methanol + H(+). The enzyme catalyses L-glutaminyl-[protein] + H2O = L-glutamyl-[protein] + NH4(+). Involved in chemotaxis. Part of a chemotaxis signal transduction system that modulates chemotaxis in response to various stimuli. Catalyzes the demethylation of specific methylglutamate residues introduced into the chemoreceptors (methyl-accepting chemotaxis proteins or MCP) by CheR. Also mediates the irreversible deamidation of specific glutamine residues to glutamic acid. This Anaeromyxobacter dehalogenans (strain 2CP-C) protein is Protein-glutamate methylesterase/protein-glutamine glutaminase 6.